Here is a 43-residue protein sequence, read N- to C-terminus: Protein PsbN (43 aa).

Residues 5–27 traverse the membrane as a helical segment; sequence TVFSIFISCLLLSLTGYSLYTAF.

This sequence belongs to the PsbN family.

The protein localises to the plastid. It is found in the chloroplast thylakoid membrane. May play a role in photosystem I and II biogenesis. In Chlorokybus atmophyticus (Soil alga), this protein is Protein PsbN.